Here is a 95-residue protein sequence, read N- to C-terminus: uncharacterized protein (95 aa).

This is an uncharacterized protein from Acheta domesticus (House cricket).